The primary structure comprises 212 residues: Peptide methionine sulfoxide reductase MsrA (212 aa).

Cysteine 52 is a catalytic residue.

Belongs to the MsrA Met sulfoxide reductase family.

The enzyme catalyses L-methionyl-[protein] + [thioredoxin]-disulfide + H2O = L-methionyl-(S)-S-oxide-[protein] + [thioredoxin]-dithiol. The catalysed reaction is [thioredoxin]-disulfide + L-methionine + H2O = L-methionine (S)-S-oxide + [thioredoxin]-dithiol. In terms of biological role, has an important function as a repair enzyme for proteins that have been inactivated by oxidation. Catalyzes the reversible oxidation-reduction of methionine sulfoxide in proteins to methionine. The sequence is that of Peptide methionine sulfoxide reductase MsrA from Salmonella paratyphi A (strain AKU_12601).